The primary structure comprises 435 residues: uncharacterized protein (435 aa).

A run of 12 helical transmembrane segments spans residues 14 to 34 (VSMA…GVGA), 44 to 64 (TFIL…KLGA), 84 to 104 (IITG…IALF), 123 to 143 (FNIA…NFFG), 153 to 173 (FIVL…LITI), 187 to 207 (VSGM…FGVI), 224 to 244 (AIFI…ISAI), 267 to 287 (FLGN…ISSA), 324 to 344 (LYIT…EGVA), 346 to 366 (ITSA…YILI), 375 to 395 (IVIF…YYQW), and 400 to 420 (FVFY…IIYR).

The protein resides in the cell membrane. This is an uncharacterized protein from Methanocaldococcus jannaschii (strain ATCC 43067 / DSM 2661 / JAL-1 / JCM 10045 / NBRC 100440) (Methanococcus jannaschii).